A 94-amino-acid polypeptide reads, in one-letter code: Conotoxin Gla-MrII (94 aa).

An N-terminal signal peptide occupies residues methionine 1–cysteine 25. Glutamate 30, glutamate 34, glutamate 37, glutamate 40, and glutamate 41 each carry 4-carboxyglutamate. Residues serine 78 to aspartate 94 constitute a propeptide that is removed on maturation.

It belongs to the conotoxin I2 superfamily. Contains 4 disulfide bonds. In terms of tissue distribution, expressed by the venom duct.

The protein localises to the secreted. The protein is Conotoxin Gla-MrII of Conus marmoreus (Marble cone).